The chain runs to 267 residues: Glucosamine-6-phosphate deaminase (267 aa).

The active-site Proton acceptor; for enolization step is Asp72. Asp141 serves as the catalytic For ring-opening step. Residue His143 is the Proton acceptor; for ring-opening step of the active site. The active-site For ring-opening step is Glu148.

Belongs to the glucosamine/galactosamine-6-phosphate isomerase family. NagB subfamily. As to quaternary structure, homohexamer.

The catalysed reaction is alpha-D-glucosamine 6-phosphate + H2O = beta-D-fructose 6-phosphate + NH4(+). It participates in amino-sugar metabolism; N-acetylneuraminate degradation; D-fructose 6-phosphate from N-acetylneuraminate: step 5/5. With respect to regulation, allosterically activated by N-acetylglucosamine 6-phosphate (GlcNAc6P). Functionally, catalyzes the reversible isomerization-deamination of glucosamine 6-phosphate (GlcN6P) to form fructose 6-phosphate (Fru6P) and ammonium ion. The chain is Glucosamine-6-phosphate deaminase from Pasteurella multocida (strain Pm70).